We begin with the raw amino-acid sequence, 284 residues long: Bifunctional protein FolD (284 aa).

NADP(+) is bound by residues 166-168 (GAS) and I232.

The protein belongs to the tetrahydrofolate dehydrogenase/cyclohydrolase family. As to quaternary structure, homodimer.

It carries out the reaction (6R)-5,10-methylene-5,6,7,8-tetrahydrofolate + NADP(+) = (6R)-5,10-methenyltetrahydrofolate + NADPH. The enzyme catalyses (6R)-5,10-methenyltetrahydrofolate + H2O = (6R)-10-formyltetrahydrofolate + H(+). It functions in the pathway one-carbon metabolism; tetrahydrofolate interconversion. In terms of biological role, catalyzes the oxidation of 5,10-methylenetetrahydrofolate to 5,10-methenyltetrahydrofolate and then the hydrolysis of 5,10-methenyltetrahydrofolate to 10-formyltetrahydrofolate. The protein is Bifunctional protein FolD of Shewanella sediminis (strain HAW-EB3).